A 1217-amino-acid chain; its full sequence is Splicing factor 3B subunit 3 (1217 aa).

2 interaction with PHF5A, SF3B1 and SF3B5 regions span residues 105–119 and 145–168; these read ETFG…VPGQ and NRDA…TLVY. Ser156 carries the phosphoserine modification. 2 interaction with SF3B1 and SF3B5 regions span residues 193 to 231 and 786 to 804; these read DNDP…LEEH and RKFV…ETDH. The tract at residues 1028 to 1049 is interaction with SF3B1; that stretch reads TYPRWVTTASLLDYDTVAGADK. The interval 1100-1123 is interaction with SF3B5; sequence TVLSLQKTTLIPGGSESLVYTTLS. Thr1200 is subject to Phosphothreonine.

The protein belongs to the RSE1 family. As to quaternary structure, component of the 17S U2 SnRNP complex, a ribonucleoprotein complex that contains small nuclear RNA (snRNA) U2 and a number of specific proteins. Part of the SF3B subcomplex of the 17S U2 SnRNP complex. SF3B associates with the splicing subcomplex SF3A and a 12S RNA unit to form the U2 small nuclear ribonucleoproteins complex (U2 snRNP). Within the SF3B subcomplex, interacts directly with SF3B1 (via HEAT domain), SF3B5 and PHF5A. Identified in the spliceosome A complex; remains associated with the spliceosome throughout the splicing process. Component of the spliceosome B complex. Identified in the spliceosome C complex. Identified in the spliceosome E complex. Component of the minor (U12-type spliceosome) spliceosome. Within this complex, interacts with SCNM1. Associates with the STAGA transcription coactivator-HAT complex. Interacts with SUPT3H. Interacts with TAF3.

It is found in the nucleus. Component of the 17S U2 SnRNP complex of the spliceosome, a large ribonucleoprotein complex that removes introns from transcribed pre-mRNAs. The 17S U2 SnRNP complex (1) directly participates in early spliceosome assembly and (2) mediates recognition of the intron branch site during pre-mRNA splicing by promoting the selection of the pre-mRNA branch-site adenosine, the nucleophile for the first step of splicing. Within the 17S U2 SnRNP complex, SF3B3 is part of the SF3B subcomplex, which is required for 'A' complex assembly formed by the stable binding of U2 snRNP to the branchpoint sequence in pre-mRNA. Sequence independent binding of SF3A and SF3B subcomplexes upstream of the branch site is essential, it may anchor U2 snRNP to the pre-mRNA. May also be involved in the assembly of the 'E' complex. Also acts as a component of the minor spliceosome, which is involved in the splicing of U12-type introns in pre-mRNAs. The sequence is that of Splicing factor 3B subunit 3 (Sf3b3) from Mus musculus (Mouse).